The sequence spans 269 residues: Lipid II flippase Amj (269 aa).

7 consecutive transmembrane segments (helical) span residues 1 to 21 (MHVI…IHSI), 31 to 51 (SGAR…MVIV), 84 to 104 (FLIF…PSFV), 105 to 125 (ALFS…FQVF), 161 to 181 (LFVI…SALY), 192 to 212 (TAVM…AIFV), and 245 to 265 (VAGT…IAWL).

Belongs to the Amj family.

It localises to the cell membrane. It participates in cell wall biogenesis; peptidoglycan biosynthesis. Functionally, involved in peptidoglycan biosynthesis. Transports lipid-linked peptidoglycan precursors from the inner to the outer leaflet of the cytoplasmic membrane. May serve as a defense mechanism against naturally occurring MurJ antagonists. In Bacillus subtilis (strain 168), this protein is Lipid II flippase Amj.